The primary structure comprises 344 residues: Glucan endo-1,3-beta-glucosidase (344 aa).

The first 27 residues, 1-27 (MALTRNRPFVVVLLLGFVIMSTITIGA), serve as a signal peptide directing secretion. Residue Glu123 is the Proton donor of the active site. The Nucleophile role is filled by Glu268.

It belongs to the glycosyl hydrolase 17 family.

It catalyses the reaction Hydrolysis of (1-&gt;3)-beta-D-glucosidic linkages in (1-&gt;3)-beta-D-glucans.. Its function is as follows. Implicated in the defense of plants against pathogens. The polypeptide is Glucan endo-1,3-beta-glucosidase (Vitis vinifera (Grape)).